A 254-amino-acid polypeptide reads, in one-letter code: SLA class II histocompatibility antigen, DQ haplotype C alpha chain (254 aa).

The signal sequence occupies residues 1–23 (MVPGRVLMWGALALTTVMSACGG). Residues 24–120 (EDIAADHVAS…KVPEVTVFSK (97 aa)) are alpha-1. At 24–216 (EDIAADHVAS…IPAPMSELTE (193 aa)) the chain is on the extracellular side. 2 N-linked (GlcNAc...) asparagine glycosylation sites follow: asparagine 104 and asparagine 144. The region spanning 113 to 204 (PEVTVFSKSP…LDKPLLKHWE (92 aa)) is the Ig-like C1-type domain. Residues 121-203 (SPVILGQPNT…GLDKPLLKHW (83 aa)) form an alpha-2 region. A disulfide bridge links cysteine 133 with cysteine 188. A connecting peptide region spans residues 204 to 216 (EPEIPAPMSELTE). The chain crosses the membrane as a helical span at residues 217-239 (TVVCALGLIVGLVGIVVGTVFII). The Cytoplasmic portion of the chain corresponds to 240-254 (QGLRSGGPSRHQGSL).

Belongs to the MHC class II family.

Its subcellular location is the membrane. In Sus scrofa (Pig), this protein is SLA class II histocompatibility antigen, DQ haplotype C alpha chain.